A 316-amino-acid polypeptide reads, in one-letter code: Porphobilinogen deaminase (316 aa).

The residue at position 245 (cysteine 245) is an S-(dipyrrolylmethanemethyl)cysteine.

The protein belongs to the HMBS family. As to quaternary structure, monomer. Requires dipyrromethane as cofactor.

It carries out the reaction 4 porphobilinogen + H2O = hydroxymethylbilane + 4 NH4(+). Its pathway is porphyrin-containing compound metabolism; protoporphyrin-IX biosynthesis; coproporphyrinogen-III from 5-aminolevulinate: step 2/4. The protein operates within porphyrin-containing compound metabolism; chlorophyll biosynthesis. In terms of biological role, tetrapolymerization of the monopyrrole PBG into the hydroxymethylbilane pre-uroporphyrinogen in several discrete steps. The chain is Porphobilinogen deaminase from Prochlorococcus marinus (strain MIT 9312).